A 438-amino-acid chain; its full sequence is Probable exopolygalacturonase B (438 aa).

Residues 1–15 (MYLLPLTLFLTAAFG) form the signal peptide. Asn118, Asn185, and Asn225 each carry an N-linked (GlcNAc...) asparagine glycan. Residues 209 to 248 (TNDVSFDNVYIHAFSTNASSDPANTDGMDSLDVDGVSFTN) form a PbH1 1 repeat. Asp255 acts as the Proton donor in catalysis. The cysteines at positions 257 and 274 are disulfide-linked. N-linked (GlcNAc...) asparagine glycans are attached at residues Asn263 and Asn275. The active site involves His278. PbH1 repeat units lie at residues 295-316 (IENV…RLKA) and 327-348 (INNV…VLDQ). N-linked (GlcNAc...) asparagine glycosylation is found at Asn302, Asn329, Asn354, and Asn366. The cysteines at positions 392 and 398 are disulfide-linked. A PbH1 4 repeat occupies 398–430 (CTNITLSNVNLTSPKGTAEIVCDDIQGGIGVDC). N-linked (GlcNAc...) asparagine glycans are attached at residues Asn400 and Asn407.

This sequence belongs to the glycosyl hydrolase 28 family.

The protein localises to the secreted. It catalyses the reaction [(1-&gt;4)-alpha-D-galacturonosyl](n) + H2O = alpha-D-galacturonate + [(1-&gt;4)-alpha-D-galacturonosyl](n-1). Functionally, specific in hydrolyzing the terminal glycosidic bond of polygalacturonic acid and oligogalacturonates. The polypeptide is Probable exopolygalacturonase B (pgxB) (Aspergillus niger (strain ATCC MYA-4892 / CBS 513.88 / FGSC A1513)).